The primary structure comprises 397 residues: Beta sliding clamp (397 aa).

It belongs to the beta sliding clamp family. Forms a ring-shaped head-to-tail homodimer around DNA which binds and tethers DNA polymerases and other proteins to the DNA. The DNA replisome complex has a single clamp-loading complex (3 tau and 1 each of delta, delta', psi and chi subunits) which binds 3 Pol III cores (1 core on the leading strand and 2 on the lagging strand) each with a beta sliding clamp dimer. Additional proteins in the replisome are other copies of gamma, psi and chi, Ssb, DNA helicase and RNA primase.

The protein localises to the cytoplasm. Functionally, confers DNA tethering and processivity to DNA polymerases and other proteins. Acts as a clamp, forming a ring around DNA (a reaction catalyzed by the clamp-loading complex) which diffuses in an ATP-independent manner freely and bidirectionally along dsDNA. Initially characterized for its ability to contact the catalytic subunit of DNA polymerase III (Pol III), a complex, multichain enzyme responsible for most of the replicative synthesis in bacteria; Pol III exhibits 3'-5' exonuclease proofreading activity. The beta chain is required for initiation of replication as well as for processivity of DNA replication. The sequence is that of Beta sliding clamp (dnaN) from Mycolicibacterium smegmatis (strain ATCC 700084 / mc(2)155) (Mycobacterium smegmatis).